A 747-amino-acid chain; its full sequence is Meprin A subunit alpha (747 aa).

A signal peptide spans 1–20 (MLWIQPACLLSLIFSAHIAA). Positions 21–64 (VSIKHLLNGSDHDTDVGEQKDIFEINLAAGLNLFQGDILLPRTR) are excised as a propeptide. N-linked (GlcNAc...) asparagine glycans are attached at residues Asn-28 and Asn-139. One can recognise a Peptidase M12A domain in the interval 65 to 259 (NAMRDPSSRW…IRLNRMYNCT (195 aa)). Residues 65–713 (NAMRDPSSRW…FYAGERCQAM (649 aa)) are Extracellular-facing. Cystine bridges form between Cys-106-Cys-258, Cys-127-Cys-146, and Cys-268-Cys-430. Residue His-154 participates in Zn(2+) binding. Glu-155 is a catalytic residue. 2 residues coordinate Zn(2+): His-158 and His-164. Asn-221, Asn-257, Asn-317, Asn-413, Asn-439, Asn-533, and Asn-540 each carry an N-linked (GlcNAc...) asparagine glycan. The 170-residue stretch at 263 to 432 (TLLDHCDFEK…ITLTETPCPA (170 aa)) folds into the MAM domain. Positions 433–594 (GVWTIRNISQ…GDSLIIFVDF (162 aa)) constitute an MATH domain. Residues 638–663 (ESLPSSLGQRHPSRQKRSVENTGPME) are disordered. In terms of domain architecture, EGF-like spans 671-711 (FRDPCDPNPCQNEGTCVNVKGMASCRCVSGHAFFYAGERCQ). Disulfide bonds link Cys-675–Cys-686, Cys-680–Cys-695, and Cys-697–Cys-710. A helical membrane pass occupies residues 714–741 (HVHGSLLGLLIGCIAGLIFLTFVTFSTT). Over 742 to 747 (NGKLRQ) the chain is Cytoplasmic.

As to quaternary structure, homotetramer consisting of disulfide-linked alpha subunits, homooligomer consisting of disulfide-linked alpha subunit homodimers, or heterotetramer of two alpha and two beta subunits formed by non-covalent association of two disulfide-linked heterodimers. Genetic factors determine which oligomer(s) will be formed (strain-specific). Interacts with MBL2 through its carbohydrate moiety. This interaction may inhibit its catalytic activity. Zn(2+) serves as cofactor. Post-translationally, N-glycosylated; contains GlcNAc, galactose, mannose and a small amount of fucose. Kidney, intestinal brush borders and salivary ducts.

The protein localises to the membrane. The enzyme catalyses Hydrolysis of protein and peptide substrates preferentially on carboxyl side of hydrophobic residues.. Its activity is regulated as follows. Inhibited by metal ion chelators EDTA and 1,10-phenanthroline, bradykinin analogs, cysteine, CONA65, and several hydroxamate compounds, particularly tyrosine hydroxamate. Not inhibited by 3,4-dichloroisocourmarin, soybean trypsin inhibitor, or the cysteine proteinase inhibitors iodoacetic acid and E-64. This chain is Meprin A subunit alpha (Mep1a), found in Mus musculus (Mouse).